The following is a 74-amino-acid chain: High-potential iron-sulfur protein (74 aa).

C36, C39, C53, and C67 together coordinate [4Fe-4S] cluster.

It belongs to the high-potential iron-sulfur protein (HiPIP) family. As to quaternary structure, homodimer.

Specific class of high-redox-potential 4Fe-4S ferredoxins. Functions in anaerobic electron transport in most purple and in some other photosynthetic bacteria and in at least one genus (Paracoccus) of halophilic, denitrifying bacteria. The polypeptide is High-potential iron-sulfur protein (hip) (Rubrivivax gelatinosus (Rhodocyclus gelatinosus)).